The primary structure comprises 249 residues: MRQKIVAGNWKMNGQIQQVTELVSQIEELIGFDCAAQVAVMPPSIYIPKVRDCLKTGKVVVGAQNVYPKDYGAYTGELSAPMLKDFDCRYVLVGHSERRQFFHEDENFVAQKFHHVKDHGMIPILCVGETLSERENGKTEQVIAQQVLAVSAKGKDCFRDCVVAYEPVWAIGTGKTATPEQAQKIHQFIRDLVGEINDSDAKHLTLIYGGSVNENNAKALFSMPDIDGGLVGGASLNAKQFVEIVKCIN.

9–11 (NWK) provides a ligand contact to substrate. His-95 functions as the Electrophile in the catalytic mechanism. Glu-166 acts as the Proton acceptor in catalysis. Substrate contacts are provided by residues Gly-172, Ser-211, and 232–233 (GG).

The protein belongs to the triosephosphate isomerase family. Homodimer.

It is found in the cytoplasm. The enzyme catalyses D-glyceraldehyde 3-phosphate = dihydroxyacetone phosphate. The protein operates within carbohydrate biosynthesis; gluconeogenesis. Its pathway is carbohydrate degradation; glycolysis; D-glyceraldehyde 3-phosphate from glycerone phosphate: step 1/1. Its function is as follows. Involved in the gluconeogenesis. Catalyzes stereospecifically the conversion of dihydroxyacetone phosphate (DHAP) to D-glyceraldehyde-3-phosphate (G3P). The chain is Triosephosphate isomerase from Legionella pneumophila (strain Paris).